The following is a 67-amino-acid chain: Sporulation protein 24 (67 aa).

Ser-24 and Ser-32 each carry phosphoserine.

Post-translationally, phosphorylated during meiosis. During meiosis, exists in both unphosphorylated and phosphorylated forms with the highest degree of phosphorylation occurring in mid-meiosis.

Its subcellular location is the prospore membrane. Required for efficient sporulation. This chain is Sporulation protein 24, found in Saccharomyces cerevisiae (strain ATCC 204508 / S288c) (Baker's yeast).